The chain runs to 297 residues: HTH-type transcriptional regulator ArgP (297 aa).

The region spanning 4 to 60 (PDYRTLQALDAVIRERGFERAAQKLCITQSAVSQRIKQLENMFGQPLLVRTVPPRPT) is the HTH lysR-type domain. The H-T-H motif DNA-binding region spans 21 to 40 (FERAAQKLCITQSAVSQRIK).

It belongs to the LysR transcriptional regulatory family. As to quaternary structure, homodimer.

Controls the transcription of genes involved in arginine and lysine metabolism. The sequence is that of HTH-type transcriptional regulator ArgP from Escherichia coli O7:K1 (strain IAI39 / ExPEC).